Reading from the N-terminus, the 1174-residue chain is DNA-directed RNA polymerase subunit beta (1174 aa).

The protein belongs to the RNA polymerase beta chain family. In terms of assembly, the RNAP catalytic core consists of 2 alpha, 1 beta, 1 beta' and 1 omega subunit. When a sigma factor is associated with the core the holoenzyme is formed, which can initiate transcription.

The catalysed reaction is RNA(n) + a ribonucleoside 5'-triphosphate = RNA(n+1) + diphosphate. Functionally, DNA-dependent RNA polymerase catalyzes the transcription of DNA into RNA using the four ribonucleoside triphosphates as substrates. This Mycolicibacterium gilvum (strain PYR-GCK) (Mycobacterium gilvum (strain PYR-GCK)) protein is DNA-directed RNA polymerase subunit beta.